The primary structure comprises 233 residues: Large ribosomal subunit protein uL3 (233 aa).

Belongs to the universal ribosomal protein uL3 family. In terms of assembly, part of the 50S ribosomal subunit. Forms a cluster with proteins L14 and L19.

In terms of biological role, one of the primary rRNA binding proteins, it binds directly near the 3'-end of the 23S rRNA, where it nucleates assembly of the 50S subunit. The sequence is that of Large ribosomal subunit protein uL3 from Ureaplasma urealyticum serovar 10 (strain ATCC 33699 / Western).